The sequence spans 353 residues: Methionine import ATP-binding protein MetN (353 aa).

The 242-residue stretch at 8 to 249 (LDQIDVTFHQ…PKQPLTQDFI (242 aa)) folds into the ABC transporter domain. 42–49 (GYSGAGKS) contributes to the ATP binding site.

It belongs to the ABC transporter superfamily. Methionine importer (TC 3.A.1.24) family. The complex is composed of two ATP-binding proteins (MetN), two transmembrane proteins (MetI) and a solute-binding protein (MetQ).

The protein localises to the cell membrane. It carries out the reaction L-methionine(out) + ATP + H2O = L-methionine(in) + ADP + phosphate + H(+). The enzyme catalyses D-methionine(out) + ATP + H2O = D-methionine(in) + ADP + phosphate + H(+). Its function is as follows. Part of the ABC transporter complex MetNIQ involved in methionine import. Responsible for energy coupling to the transport system. This Streptococcus pneumoniae serotype 4 (strain ATCC BAA-334 / TIGR4) protein is Methionine import ATP-binding protein MetN.